A 1097-amino-acid chain; its full sequence is RecBCD enzyme subunit RecC (1097 aa).

The protein belongs to the RecC family. In terms of assembly, heterotrimer of RecB, RecC and RecD. All subunits contribute to DNA-binding.

Functionally, a helicase/nuclease that prepares dsDNA breaks (DSB) for recombinational DNA repair. Binds to DSBs and unwinds DNA via a highly rapid and processive ATP-dependent bidirectional helicase activity. Holoenzyme degrades any linearized DNA that is unable to undergo homologous recombination. In the holoenzyme this subunit recognizes the wild-type Chi sequence, and when added to isolated RecB increases its ATP-dependent helicase processivity. Unlike the case in E.coli, suppresses RecA-dependent homologous recombination, is instead required for single-strand annealing pathway repair of DSB. The sequence is that of RecBCD enzyme subunit RecC from Mycobacterium tuberculosis (strain ATCC 25618 / H37Rv).